We begin with the raw amino-acid sequence, 396 residues long: Acetylornithine aminotransferase 2 (396 aa).

Residues 102–103 (GA) and Phe-134 each bind pyridoxal 5'-phosphate. Arg-137 is a N(2)-acetyl-L-ornithine binding site. Pyridoxal 5'-phosphate is bound at residue 219–222 (DEVQ). At Lys-248 the chain carries N6-(pyridoxal phosphate)lysine. Thr-276 serves as a coordination point for pyridoxal 5'-phosphate.

It belongs to the class-III pyridoxal-phosphate-dependent aminotransferase family. ArgD subfamily. In terms of assembly, homodimer. Requires pyridoxal 5'-phosphate as cofactor.

The protein localises to the cytoplasm. The enzyme catalyses N(2)-acetyl-L-ornithine + 2-oxoglutarate = N-acetyl-L-glutamate 5-semialdehyde + L-glutamate. Its pathway is amino-acid biosynthesis; L-arginine biosynthesis; N(2)-acetyl-L-ornithine from L-glutamate: step 4/4. In Bordetella pertussis (strain Tohama I / ATCC BAA-589 / NCTC 13251), this protein is Acetylornithine aminotransferase 2.